A 430-amino-acid polypeptide reads, in one-letter code: GTPase Obg (430 aa).

The Obg domain maps to 1 to 158 (MFIDTAKVFV…LNIVLELKLL (158 aa)). An OBG-type G domain is found at 159 to 331 (ADVGLLGFPN…VMKEAARILK (173 aa)). GTP-binding positions include 165–172 (GFPNVGKS), 190–194 (FTTLK), 212–215 (DIPG), 282–285 (NKSD), and 312–314 (SAA). Mg(2+) is bound by residues Ser-172 and Thr-192. Residues 345-430 (MYIPEEKRFT…LNDFEFEYIL (86 aa)) form the OCT domain.

The protein belongs to the TRAFAC class OBG-HflX-like GTPase superfamily. OBG GTPase family. Monomer. Requires Mg(2+) as cofactor.

Its subcellular location is the cytoplasm. Its function is as follows. An essential GTPase which binds GTP, GDP and possibly (p)ppGpp with moderate affinity, with high nucleotide exchange rates and a fairly low GTP hydrolysis rate. Plays a role in control of the cell cycle, stress response, ribosome biogenesis and in those bacteria that undergo differentiation, in morphogenesis control. The chain is GTPase Obg from Clostridium beijerinckii (strain ATCC 51743 / NCIMB 8052) (Clostridium acetobutylicum).